The chain runs to 438 residues: SPbeta prophage-derived uncharacterized protein YopA (438 aa).

Residues 391 to 411 (LHVLYLGVWYLELLTLGILGY) form a helical membrane-spanning segment.

Its subcellular location is the cell membrane. This Bacillus subtilis (strain 168) protein is SPbeta prophage-derived uncharacterized protein YopA (yopA).